We begin with the raw amino-acid sequence, 142 residues long: Large ribosomal subunit protein uL13 (142 aa).

Belongs to the universal ribosomal protein uL13 family. As to quaternary structure, part of the 50S ribosomal subunit.

Its function is as follows. This protein is one of the early assembly proteins of the 50S ribosomal subunit, although it is not seen to bind rRNA by itself. It is important during the early stages of 50S assembly. This Erwinia tasmaniensis (strain DSM 17950 / CFBP 7177 / CIP 109463 / NCPPB 4357 / Et1/99) protein is Large ribosomal subunit protein uL13.